Here is a 7603-residue protein sequence, read N- to C-terminus: Cysteine repeat modular protein B (7603 aa).

N-linked (GlcNAc...) asparagine glycosylation is present at N172. A helical membrane pass occupies residues L223 to T243. 2 disordered regions span residues G248–G275 and R291–F323. Positions S263–G275 are enriched in low complexity. A compositionally biased stretch (basic residues) spans S302–R313. 6 N-linked (GlcNAc...) asparagine glycosylation sites follow: N329, N589, N848, N1128, N1183, and N1402. The disordered stretch occupies residues V1554–F1574. Low complexity predominate over residues S1557–S1573. N-linked (GlcNAc...) asparagine glycosylation is found at N1622, N2578, N2664, N3094, and N3126. The disordered stretch occupies residues S3316–D3445. Positions E3321 to T3340 are enriched in acidic residues. Positions E3342–G3360 are enriched in low complexity. N-linked (GlcNAc...) asparagine glycosylation is found at N3546, N4367, N4823, N4901, N5186, N5546, and N5666. The disordered stretch occupies residues L5758–K5799. The segment covering T5767 to D5776 has biased composition (acidic residues). A compositionally biased stretch (low complexity) spans S5780–S5794. N5806, N5876, N5998, N6055, and N6369 each carry an N-linked (GlcNAc...) asparagine glycan. The interval G6043–A6115 is disordered. Polar residues predominate over residues D6051–S6060. The span at E6391–E6405 shows a compositional bias: basic and acidic residues. The segment at E6391–L6436 is disordered. The span at L6410–A6423 shows a compositional bias: polar residues. A glycan (N-linked (GlcNAc...) asparagine) is linked at N6453. Transmembrane regions (helical) follow at residues I6520 to I6540, V6552 to A6572, L6578 to P6598, I6627 to T6647, L6770 to A6790, C6831 to F6851, G6888 to F6908, and G6912 to V6932. N7013 carries N-linked (GlcNAc...) asparagine glycosylation. The chain crosses the membrane as a helical span at residues F7017 to I7037. N7061 carries an N-linked (GlcNAc...) asparagine glycan. Residues A7174–D7242 adopt a coiled-coil conformation. The interval A7379–E7603 is disordered. Residues L7408–A7417 are compositionally biased toward polar residues. The N-linked (GlcNAc...) asparagine glycan is linked to N7411. Composition is skewed to low complexity over residues P7474–P7496, S7509–L7541, and G7560–P7582.

In terms of assembly, component of a complex, at least composed of cysteine repeat modular protein A (CRMPa), cysteine repeat modular protein B (CRMPb), micronemal protein 15 (MIC15) and thrombospondin type 1 domain-containing protein (TSP1).

The protein localises to the cell membrane. It localises to the endoplasmic reticulum. The protein resides in the golgi apparatus. Its function is as follows. Required for triggering rhoptry secretion. Plays a role in host cell invasion. This is Cysteine repeat modular protein B from Toxoplasma gondii.